The primary structure comprises 406 residues: MSLIRVNGEAFKFSLESLEEDPFETKETLEILVKQTSVVLLAAGESRRFSQTIKKQWLRSNHTPLWLSVYESFKEALDFKEIVLVVSELDYIYIQRHYPEIKLIKGGASRQESVRNALKIIDSAYTLTSDVARGLANMETLKSLFLTLQQTSHYCIAPYLPCYDTAIYYNEALDREAIKLIQTPQLSHTKTLQSALNQGDFKDESSAILQAFPNSVSYIEGSKDLHKLTTSDDLKHFAFFFNPAKDTFIGMGFDTHAFIKDKPMVLGGVVLDCEFGLKAHSDGDALLHAVIDAVLGAIKGGDIGEWFPDNDPKYKNASSKELLKIVLDFSQSIGFELFEMGATIFSEIPKITPYKPAILENLSQLLGLEKSQISLKATTMEKMGFIGKQEGLLVQAHVSMRYKQKL.

The segment at 1 to 247 (MSLIRVNGEA…AFFFNPAKDT (247 aa)) is 2-C-methyl-D-erythritol 4-phosphate cytidylyltransferase. The interval 248–406 (FIGMGFDTHA…HVSMRYKQKL (159 aa)) is 2-C-methyl-D-erythritol 2,4-cyclodiphosphate synthase. A divalent metal cation is bound by residues Asp-254 and His-256. 4-CDP-2-C-methyl-D-erythritol 2-phosphate is bound by residues 254 to 256 (DTH) and 280 to 281 (HS). Residue His-288 coordinates a divalent metal cation. 4-CDP-2-C-methyl-D-erythritol 2-phosphate is bound by residues 302-304 (DIG), 307-311 (FPDND), 378-381 (TTME), Phe-385, and Lys-388.

This sequence in the N-terminal section; belongs to the IspD/TarI cytidylyltransferase family. IspD subfamily. It in the C-terminal section; belongs to the IspF family. The cofactor is a divalent metal cation.

The enzyme catalyses 2-C-methyl-D-erythritol 4-phosphate + CTP + H(+) = 4-CDP-2-C-methyl-D-erythritol + diphosphate. It carries out the reaction 4-CDP-2-C-methyl-D-erythritol 2-phosphate = 2-C-methyl-D-erythritol 2,4-cyclic diphosphate + CMP. It participates in isoprenoid biosynthesis; isopentenyl diphosphate biosynthesis via DXP pathway; isopentenyl diphosphate from 1-deoxy-D-xylulose 5-phosphate: step 2/6. Its pathway is isoprenoid biosynthesis; isopentenyl diphosphate biosynthesis via DXP pathway; isopentenyl diphosphate from 1-deoxy-D-xylulose 5-phosphate: step 4/6. Its function is as follows. Bifunctional enzyme that catalyzes the formation of 4-diphosphocytidyl-2-C-methyl-D-erythritol from CTP and 2-C-methyl-D-erythritol 4-phosphate (MEP) (IspD), and catalyzes the conversion of 4-diphosphocytidyl-2-C-methyl-D-erythritol 2-phosphate (CDP-ME2P) to 2-C-methyl-D-erythritol 2,4-cyclodiphosphate (ME-CPP) with a corresponding release of cytidine 5-monophosphate (CMP) (IspF). In Helicobacter pylori (strain HPAG1), this protein is Bifunctional enzyme IspD/IspF.